We begin with the raw amino-acid sequence, 408 residues long: Sporulation integral membrane protein YlbJ (408 aa).

8 helical membrane passes run 6-26, 43-63, 81-101, 131-151, 214-234, 294-314, 324-344, and 377-397; these read INTL…ISHP, VVFP…GFGI, VPGV…PAGA, LFIF…GILL, VTSS…FSVF, IIVS…VAGI, PFFI…MLLW, and LLVQ…IIIF.

The protein localises to the cell membrane. Functionally, required for spore cortex formation. This chain is Sporulation integral membrane protein YlbJ (ylbJ), found in Bacillus subtilis (strain 168).